A 30-amino-acid polypeptide reads, in one-letter code: Dermaseptin-DI4 (30 aa).

In terms of tissue distribution, expressed by the skin glands.

It is found in the secreted. In terms of biological role, antibacterial activity against Gram-positive bacteria S.aureus and E.faecalis, and Gram-negative bacteria P.aeruginosa and E.coli. This chain is Dermaseptin-DI4, found in Phyllomedusa distincta (Monkey frog).